The primary structure comprises 363 residues: MEDLEEDVRFIVDETLDFGGLSPSDSREEEDITVLVTPEKPLRRGLSHRSDPNAVAPAPQGVRLSLGPLSPEKLEEILDEANRLAAQLEQCALQDRESAGEGLGPRRVKPSPRRETFVLKDSPVRDLLPTVNSLTRSTPSPSSLTPRLRSNDRKGSVRALRATSGKRPSNMKRESPTCNLFPASKSPASSPLTRSTPPVRGRAGPSGRAAASEETRAAKLRVSGSGEFVGLTLKFLHPSPPGPPTPIRSVLAPQPSTSNSQRLPRPQGAAAKSSSQLPIPSAIPRPASRMPLTSRSVPPGRGALPPDSLSTRKGLPRPSTAGHRVRESGHKVPVSQRLNLPVMGATRSNLQPPRKVAVPGPTR.

Phosphoserine is present on Ser-22. Repeat 1 spans residues 38-41 (PEKP). Residues 39 to 67 (EKPLRRGLSHRSDPNAVAPAPQGVRLSLG) are disordered. Leu-42 bears the Phosphoserine mark. Gly-45 is modified (phosphothreonine). Residues Ser-47, Ser-65, Ser-70, Ser-98, Ser-122, and Ser-140 each carry the phosphoserine modification. Residues 68–71 (PLSP) form repeat 2. Residues 70–94 (SPEKLEEILDEANRLAAQLEQCALQ) adopt a coiled-coil conformation. Residues 95 to 363 (DRESAGEGLG…RKVAVPGPTR (269 aa)) form a disordered region. The segment at 103–246 (LGPRRVKPSP…HPSPPGPPTP (144 aa)) is 4 X 4 AA repeats of P-X-X-P. A compositionally biased stretch (basic and acidic residues) spans 112-124 (PRRETFVLKDSPV). Residues 133–148 (SLTRSTPSPSSLTPRL) show a composition bias toward low complexity. Thr-145 bears the Phosphothreonine mark. Residues Ser-186 and Ser-190 each carry the phosphoserine modification. Residues 186–196 (SPASSPLTRST) are compositionally biased toward polar residues. Over residues 197 to 210 (PPVRGRAGPSGRAA) the composition is skewed to low complexity. A Phosphoserine modification is found at Ser-212. At Thr-215 the chain carries Phosphothreonine. Tandem repeats lie at residues 238–241 (PSPP) and 243–246 (PPTP).

The protein belongs to the PSRC1 family. As to quaternary structure, interacts with APC2. Interacts with KIF2A. Interacts with ANKRD53; recruits ANKRD53 to the spindle during mitosis. Phosphorylated during mitosis. As to expression, widely expressed in adult and fetal tissues, with highest expression in the adult brain and fetal thymus. Not detected in adult skeletal muscle.

Its subcellular location is the cytoplasm. It is found in the cytoskeleton. It localises to the spindle. The protein resides in the spindle pole. In terms of biological role, required for normal progression through mitosis. Required for normal congress of chromosomes at the metaphase plate, and for normal rate of chromosomal segregation during anaphase. Plays a role in the regulation of mitotic spindle dynamics. Increases the rate of turnover of microtubules on metaphase spindles, and contributes to the generation of normal tension across sister kinetochores. Recruits KIF2A and ANKRD53 to the mitotic spindle and spindle poles. May participate in p53/TP53-regulated growth suppression. The sequence is that of Proline/serine-rich coiled-coil protein 1 (PSRC1) from Homo sapiens (Human).